The following is a 57-amino-acid chain: Large ribosomal subunit protein bL32 (57 aa).

Positions 1–37 (MAVQQNKPTRSKRGMRRSHDALTAVTSLSVDKTSGEK) are disordered.

It belongs to the bacterial ribosomal protein bL32 family.

The polypeptide is Large ribosomal subunit protein bL32 (Escherichia fergusonii (strain ATCC 35469 / DSM 13698 / CCUG 18766 / IAM 14443 / JCM 21226 / LMG 7866 / NBRC 102419 / NCTC 12128 / CDC 0568-73)).